Reading from the N-terminus, the 310-residue chain is Putative S-adenosyl-L-methionine-dependent methyltransferase MMAR_0357 (310 aa).

Residues D132 and D161–L162 contribute to the S-adenosyl-L-methionine site.

This sequence belongs to the UPF0677 family.

Exhibits S-adenosyl-L-methionine-dependent methyltransferase activity. In Mycobacterium marinum (strain ATCC BAA-535 / M), this protein is Putative S-adenosyl-L-methionine-dependent methyltransferase MMAR_0357.